A 218-amino-acid chain; its full sequence is Ornithine decarboxylase antizyme 2 (218 aa).

Belongs to the ODC antizyme family. Interacts with ODC1 and thereby sterically blocks ODC homodimerization. In terms of tissue distribution, expressed ubiquitously in 24 hours embryos, with highest levels in telencephalon, lens, retina, cerebellum and hindbrain primordia.

Its function is as follows. Ornithine decarboxylase (ODC) antizyme protein that negatively regulates ODC activity and intracellular polyamine biosynthesis and uptake in response to increased intracellular polyamine levels. Binds to ODC monomers, inhibiting the assembly of the functional ODC homodimers. Does not target the ODC monomers for degradation, which allows a protein synthesis-independent restoration of ODC activity. This Danio rerio (Zebrafish) protein is Ornithine decarboxylase antizyme 2 (oaz1b).